Consider the following 565-residue polypeptide: Hemagglutinin-neuraminidase (565 aa).

The Intravirion segment spans residues 1-19; sequence MVAEDAPVRGTCRVLFRTT. A helical membrane pass occupies residues 20–40; that stretch reads TLLFLCTLLSLSISILYESLI. Over 41 to 565 the chain is Virion surface; that stretch reads TQNQIMSQAG…VPFIRQVTLS (525 aa). N-linked (GlcNAc...) asparagine; by host glycans are attached at residues asparagine 110 and asparagine 139. 3 disulfide bridges follow: cysteine 161/cysteine 185, cysteine 175/cysteine 236, and cysteine 227/cysteine 240. The interval 223 to 228 is involved in neuraminidase activity; sequence NRKSCS. Residue asparagine 267 is glycosylated (N-linked (GlcNAc...) asparagine; by host). Cystine bridges form between cysteine 333-cysteine 454, cysteine 365-cysteine 375, and cysteine 448-cysteine 458. Asparagine 504 is a glycosylation site (N-linked (GlcNAc...) asparagine; by host). A disulfide bond links cysteine 528 and cysteine 539.

It belongs to the paramyxoviruses hemagglutinin-neuraminidase family. As to quaternary structure, homotetramer; composed of disulfide-linked homodimers. Interacts with F protein trimer.

Its subcellular location is the virion membrane. It is found in the host cell membrane. It catalyses the reaction Hydrolysis of alpha-(2-&gt;3)-, alpha-(2-&gt;6)-, alpha-(2-&gt;8)- glycosidic linkages of terminal sialic acid residues in oligosaccharides, glycoproteins, glycolipids, colominic acid and synthetic substrates.. Functionally, attaches the virus to sialic acid-containing cell receptors and thereby initiating infection. Binding of HN protein to the receptor induces a conformational change that allows the F protein to trigger virion/cell membranes fusion. In terms of biological role, neuraminidase activity ensures the efficient spread of the virus by dissociating the mature virions from the neuraminic acid containing glycoproteins. This chain is Hemagglutinin-neuraminidase (HN), found in Canis lupus familiaris (Dog).